Here is a 505-residue protein sequence, read N- to C-terminus: Circadian clock protein KaiC3 (505 aa).

2 consecutive KaiC domains span residues 10–252 (EKLE…KSSD) and 253–485 (IRIT…LAGT). Serine 423 carries the phosphoserine; by autocatalysis modification. Threonine 424 carries the post-translational modification Phosphothreonine; by autocatalysis.

The protein belongs to the KaiC family. In terms of assembly, multimerizes, probably forming homohexamers, no interaction with KaiC1 or KaiC2 is seen. In another study forms hexamers, interacts with KaiB1, KaiB3, and KaiC1. Post-translationally, autophosphorylates and dephosphorylates. Dephosphorylation of KaiC3 was higher at 25 than at 30 or 35 degrees Celsius.

The enzyme catalyses L-seryl-[protein] + ATP = O-phospho-L-seryl-[protein] + ADP + H(+). It catalyses the reaction L-threonyl-[protein] + ATP = O-phospho-L-threonyl-[protein] + ADP + H(+). The catalysed reaction is ATP + H2O = ADP + phosphate + H(+). ATPase activity is influenced by KaiB1 and KaiB3 in vitro; ATPase is reduced 35% by the KaiB1 tetramer and 55% by the KaiB3 monomer but not affected by KaiA or the KaiB3 tetramer. Functionally, seems to be linked to dark adaption of Synechocystis cells, but is not as essential as the core oscillator KaiAB1C1 for the circadian cycle. KaiB3 and KaiC3 may cross talk with the core oscillator. Autophosphorylates and dephosphorylates independently of KaiA. Has a weak ATPase, hydrolyzes 8.5 ATP/monomer/day, has no detectable ATP synthesis activity. ATPase activity reduced 55% by KaiB3 monomer but not the KaiB3 tetramer or KaiA in vitro, reduced 35% by KaiB1 tetramer. This chain is Circadian clock protein KaiC3, found in Synechocystis sp. (strain ATCC 27184 / PCC 6803 / Kazusa).